Reading from the N-terminus, the 446-residue chain is 5-hydroxytryptamine receptor 7 (446 aa).

Over 1 to 84 (MMGVNSSGRP…INYGRAEKVV (84 aa)) the chain is Extracellular. N5 and N67 each carry an N-linked (GlcNAc...) asparagine glycan. The chain crosses the membrane as a helical span at residues 85 to 109 (IGSILTLITLLTIAGNCLVVISVCF). At 110–119 (VKKLRQPSNY) the chain is on the cytoplasmic side. A helical membrane pass occupies residues 120–141 (LIVSLALADLSVAVAVIPFVSV). Over 142–153 (TDLIGGKWIFGH) the chain is Extracellular. Residues 154–179 (FFCNVFIAMDVMCCTASIMTLCVISI) traverse the membrane as a helical segment. An intrachain disulfide couples C156 to C232. D163 serves as a coordination point for serotonin. At 180–199 (DRYLGITRPLTYPVRQNGKC) the chain is on the cytoplasmic side. The helical transmembrane segment at 200–220 (MPKMILSVWLLSASITLPPLF) threads the bilayer. Residues 221–238 (GWAQNVNDDKVCLISQDF) are Extracellular-facing. A helical transmembrane segment spans residues 239-261 (GYTIYSTAVAFYIPMSVMLFMYY). Topologically, residues 262–327 (RIYKAARKSA…SIFKREQKAA (66 aa)) are cytoplasmic. Residues 328–353 (TTLGIIVGAFTVCWLPFFLLSTARPF) form a helical membrane-spanning segment. Residues 354–364 (ICGTACSCIPL) are Extracellular-facing. Residues 365–388 (WVERTCLWLGYANSLINPFIYAFF) form a helical membrane-spanning segment. Over 389–446 (NRDLRTTYRSLLQCQYRNINRKLSAAGMHEALKLAERPERPECVLQNSDYCRKKGHDS) the chain is Cytoplasmic. C402 carries the S-palmitoyl cysteine lipid modification.

It belongs to the G-protein coupled receptor 1 family.

The protein resides in the cell membrane. Its function is as follows. G-protein coupled receptor for 5-hydroxytryptamine (serotonin), a biogenic hormone that functions as a neurotransmitter, a hormone and a mitogen. Ligand binding causes a conformation change that triggers signaling via guanine nucleotide-binding proteins (G proteins) and modulates the activity of downstream effectors. HTR7 is coupled to G(s) G alpha proteins and mediates activation of adenylate cyclase activity. In Cavia porcellus (Guinea pig), this protein is 5-hydroxytryptamine receptor 7 (HTR7).